The chain runs to 670 residues: Lebercilin-like protein (670 aa).

The segment at 24–44 (RRSAECKRSPGTGDFSRNSNA) is disordered. Coiled-coil stretches lie at residues 148 to 259 (LHKI…EREE) and 305 to 336 (AAQT…IKNI). A disordered region spans residues 351–402 (YPKVSSTKSVQADRKSLPFTSMRHQGTQKSDVAPLTTKGKKATGNMDRKEKS). The segment covering 368-380 (PFTSMRHQGTQKS) has biased composition (polar residues). A coiled-coil region spans residues 420–440 (EDSKTKYEDLSREEKHLEVQV). Disordered regions lie at residues 495 to 520 (RSMQ…PLRQ), 533 to 594 (LHHG…FRDK), and 606 to 647 (GYVL…AFGD). The span at 546–558 (AGNTKYSHSTSKH) shows a compositional bias: polar residues. Basic and acidic residues-rich tracts occupy residues 560–572 (SNRE…HSDS), 585–594 (KAKDTTFRDK), and 621–632 (GSEEPLQSKESH). The span at 637–647 (SQASASNAFGD) shows a compositional bias: polar residues.

Belongs to the LCA5 family.

In Papio anubis (Olive baboon), this protein is Lebercilin-like protein.